We begin with the raw amino-acid sequence, 348 residues long: Large ribosomal subunit protein uL10 (348 aa).

Residues 291–348 (LPEELRGVSAADTGAAEEEESTDEEAADADQADAAEDDDAADDDGDDEDAGDALGSLF) are disordered. Acidic residues predominate over residues 305–341 (AAEEEESTDEEAADADQADAAEDDDAADDDGDDEDAG).

Belongs to the universal ribosomal protein uL10 family. In terms of assembly, part of the 50S ribosomal subunit. Forms part of the ribosomal stalk which helps the ribosome interact with GTP-bound translation factors. Forms a heptameric L10(L12)2(L12)2(L12)2 complex, where L10 forms an elongated spine to which the L12 dimers bind in a sequential fashion.

Its function is as follows. Forms part of the ribosomal stalk, playing a central role in the interaction of the ribosome with GTP-bound translation factors. This is Large ribosomal subunit protein uL10 from Haloferax volcanii (strain ATCC 29605 / DSM 3757 / JCM 8879 / NBRC 14742 / NCIMB 2012 / VKM B-1768 / DS2) (Halobacterium volcanii).